Here is an 82-residue protein sequence, read N- to C-terminus: UPF0298 protein SPCG_0698 (82 aa).

This sequence belongs to the UPF0298 family.

Its subcellular location is the cytoplasm. The sequence is that of UPF0298 protein SPCG_0698 from Streptococcus pneumoniae (strain CGSP14).